The primary structure comprises 309 residues: Probable HTH-type transcriptional regulator LtrA (309 aa).

One can recognise an HTH lysR-type domain in the interval 1 to 61 (MNLNLLPDLA…QRTTRKLRLS (61 aa)). A DNA-binding region (H-T-H motif) is located at residues 21–40 (FSAVARQNGITPSAVSRSVS).

The protein belongs to the LysR transcriptional regulatory family.

This Klebsiella pneumoniae protein is Probable HTH-type transcriptional regulator LtrA (ltrA).